The primary structure comprises 693 residues: Elongation factor G (693 aa).

In terms of domain architecture, tr-type G spans E8–I282. GTP-binding positions include A17 to T24, D81 to H85, and N135 to D138.

The protein belongs to the TRAFAC class translation factor GTPase superfamily. Classic translation factor GTPase family. EF-G/EF-2 subfamily.

Its subcellular location is the cytoplasm. Its function is as follows. Catalyzes the GTP-dependent ribosomal translocation step during translation elongation. During this step, the ribosome changes from the pre-translocational (PRE) to the post-translocational (POST) state as the newly formed A-site-bound peptidyl-tRNA and P-site-bound deacylated tRNA move to the P and E sites, respectively. Catalyzes the coordinated movement of the two tRNA molecules, the mRNA and conformational changes in the ribosome. This chain is Elongation factor G, found in Mycoplasmoides gallisepticum (strain R(low / passage 15 / clone 2)) (Mycoplasma gallisepticum).